A 188-amino-acid polypeptide reads, in one-letter code: COMM domain-containing protein 1 (188 aa).

The tract at residues 1–122 is sufficient for interaction with SLC12A2; that stretch reads MAGDLEGGKS…RWDNGLRGLS (122 aa). Positions 100, 109, and 133 each coordinate Cu cation. A COMM domain is found at 117 to 185; that stretch reads GLRGLSWRVD…EVEESINRLM (69 aa). Positions 124–188 are required for binding to PtdIns(4,5)P2; it reads RVDGKSQSRH…ESINRLMQAA (65 aa).

The protein belongs to the COMM domain-containing protein 1 family. In terms of assembly, component of the commander complex consisting of the CCC subcomplex and the retriever subcomplex. Component of the CCC (COMMD/CCDC22/CCDC93) subcomplex consisting of COMMD1, COMMD2, COMMD3, COMMD4, COMMD5, COMMD6, COMMD7, COMMD8, COMMD9, COMMD10, CCDC22 and CCDC93; within the complex forms a heterodimer with COMMD6. Interacts with VPS35L; the interaction associates the CCC complex with the retriever complex. Identified in a complex with an E3 ubiquitin ligase complex composed of TCEB1/elongin C, CUL2, SOCS1 and RBX1; in the complex interacts directly with SOCS1 and CUL2. Identified in a complex with NF-kappa-B. Interacts directly with SLC12A2. Interacts directly with ATP7B (via the N-terminal region). Interacts with ATP7A. Interacts with FAM107A; this interaction stabilizes COMMD1 in the nucleus. Interacts with CCS, CDKN2A, RELA, REL, RELB, NFKB1/p105, NFKB2/p100, NFKBIB, SCNN1D, SCNN1B, CFTR, CLU, SGK1, AKT1, CUL1, CUL2, CUL3, CUL4A, CUL4B, CUL5, CUL7, HIF1A. Ubiquitinated; undergoes both 'Lys-63'- and 'Lys-48'-linked polyubiquitination. Ubiquitinated by XIAP, leading to its proteasomal degradation.

It localises to the nucleus. The protein localises to the cytoplasm. The protein resides in the endosome membrane. It is found in the cytoplasmic vesicle. Its subcellular location is the early endosome. It localises to the recycling endosome. In terms of biological role, scaffold protein in the commander complex that is essential for endosomal recycling of transmembrane cargos; the commander complex is composed of the CCC subcomplex and the retriever subcomplex. Can modulate activity of cullin-RING E3 ubiquitin ligase (CRL) complexes by displacing CAND1; in vitro promotes CRL E3 activity and dissociates CAND1 from CUL1 and CUL2. Promotes ubiquitination of NF-kappa-B subunit RELA and its subsequent proteasomal degradation. Down-regulates NF-kappa-B activity. Involved in the regulation of membrane expression and ubiquitination of SLC12A2. Modulates Na(+) transport in epithelial cells by regulation of apical cell surface expression of amiloride-sensitive sodium channel (ENaC) subunits and by promoting their ubiquitination presumably involving NEDD4L. Promotes the localization of SCNN1D to recycling endosomes. Promotes CFTR cell surface expression through regulation of its ubiquitination. Down-regulates SOD1 activity by interfering with its homodimerization. Plays a role in copper ion homeostasis. Involved in copper-dependent ATP7A trafficking between the trans-Golgi network and vesicles in the cell periphery; the function is proposed to depend on its association within the CCC complex and cooperation with the WASH complex on early endosomes. Can bind one copper ion per monomer. May function to facilitate biliary copper excretion within hepatocytes. Binds to phosphatidylinositol 4,5-bisphosphate (PtdIns(4,5)P2). Involved in the regulation of HIF1A-mediated transcription; competes with ARNT/Hif-1-beta for binding to HIF1A resulting in decreased DNA binding and impaired transcriptional activation by HIF-1. Negatively regulates neuroblastoma G1/S phase cell cycle progression and cell proliferation by stimulating ubiquitination of NF-kappa-B subunit RELA and NF-kappa-B degradation in a FAM107A- and actin-dependent manner. This chain is COMM domain-containing protein 1 (Commd1), found in Mus musculus (Mouse).